A 417-amino-acid chain; its full sequence is Gamma-glutamyl phosphate reductase (417 aa).

This sequence belongs to the gamma-glutamyl phosphate reductase family.

It localises to the cytoplasm. It catalyses the reaction L-glutamate 5-semialdehyde + phosphate + NADP(+) = L-glutamyl 5-phosphate + NADPH + H(+). It functions in the pathway amino-acid biosynthesis; L-proline biosynthesis; L-glutamate 5-semialdehyde from L-glutamate: step 2/2. Its function is as follows. Catalyzes the NADPH-dependent reduction of L-glutamate 5-phosphate into L-glutamate 5-semialdehyde and phosphate. The product spontaneously undergoes cyclization to form 1-pyrroline-5-carboxylate. The polypeptide is Gamma-glutamyl phosphate reductase (Streptococcus agalactiae serotype Ia (strain ATCC 27591 / A909 / CDC SS700)).